The chain runs to 134 residues: Small ribosomal subunit protein uS8c (134 aa).

This sequence belongs to the universal ribosomal protein uS8 family. Part of the 30S ribosomal subunit.

The protein resides in the plastid. Its subcellular location is the chloroplast. One of the primary rRNA binding proteins, it binds directly to 16S rRNA central domain where it helps coordinate assembly of the platform of the 30S subunit. This Populus alba (White poplar) protein is Small ribosomal subunit protein uS8c (rps8).